We begin with the raw amino-acid sequence, 169 residues long: MQSLQQKASEWSGVSTDEAFSIDETNLFQKLGLQTFINLSTNFYNRVYDDEEEEWFRSIFANSKKEEAIQNQYEFFVQRMGGPPLFSQRRGHPALIGRHQPFPVTHQAAERWLHHMQLALDTTPDIDDDSKIKMMNFFRHTAYFLVAGDELKNPNQQIPCKHAAGKDNS.

Position 99 (histidine 99) interacts with heme b.

The protein belongs to the truncated hemoglobin family. Group II subfamily. In terms of assembly, homodimer when ferric.

Functionally, hemoglobin-like protein that exhibits an unusual concentration-independent binding of O(2) and CO. Required for general plant development and during nodulation. May promote shoot organogenesis from root explants. This chain is Group 2 truncated hemoglobin 3-2, found in Medicago truncatula (Barrel medic).